A 242-amino-acid chain; its full sequence is MIVLHHLKNSRSTRIVWMLEELKVPYEIKVYDRVDGRAPPAYTKLSPLGKSPIVVDDGVTYIESAAILEHLVRKYGPSFKPSEEDVAELEKYELWMHFSEASLMPFIWASHVLDLSVNMTPIFFRYIVRQFVNGIKSKYLSKETFLNLDYIDNHLASNEYFAGEQFTAADPQMCFPIFAAQRDYLSQKPYKNIKRWMRVVSDRPACRIAAEKVEDNTLTLFSDVERYSHPPTPPPEQVRSDE.

Residues 1-79 (MIVLHHLKNS…HLVRKYGPSF (79 aa)) form the GST N-terminal domain. Residues 85–234 (DVAELEKYEL…ERYSHPPTPP (150 aa)) form the GST C-terminal domain. A Phosphoserine modification is found at S228. At T232 the chain carries Phosphothreonine.

The protein belongs to the GST superfamily. In terms of assembly, interacts with sad1.

Its subcellular location is the cytoplasm. The catalysed reaction is RX + glutathione = an S-substituted glutathione + a halide anion + H(+). In terms of biological role, may have a role in the detoxification of various heavy metals. The chain is Glutathione S-transferase 3 (gst3) from Schizosaccharomyces pombe (strain 972 / ATCC 24843) (Fission yeast).